The chain runs to 773 residues: Transducin-like enhancer protein 4 (773 aa).

3 disordered regions span residues 1–22 (MIRDLSKMYPQTRHPAPHQPAQ), 140–162 (HGHGLPVPLTPHPSGLQPPAIPP), and 182–357 (LPIK…DPLA). The tract at residues 1 to 136 (MIRDLSKMYP…AIIGQQLQAQ (136 aa)) is q domain. Positions 137–204 (HLSHGHGLPV…HQRDRDSIKS (68 aa)) are GP domain. The span at 183-202 (PIKDEKKHHDNDHQRDRDSI) shows a compositional bias: basic and acidic residues. A compositionally biased stretch (low complexity) spans 203 to 214 (KSSSVSPSASFR). The interval 205 to 274 (SSVSPSASFR…SPRGSPAHSP (70 aa)) is ccN domain. Serine 208, serine 212, serine 216, and serine 222 each carry phosphoserine. Over residues 215–252 (GSEKHRNSTDYSSESKKQKTEEKEIAARYDSDGEKSDD) the composition is skewed to basic and acidic residues. Lysine 237 bears the N6-acetyllysine mark. Serine 245 is modified (phosphoserine). Serine 250 is subject to Phosphoserine; by CK2. Serine 265 bears the Phosphoserine; by CDK1 mark. Residues serine 269 and serine 273 each carry the phosphoserine modification. Basic and acidic residues predominate over residues 273-289 (SPRENGLDKTRLLKKDA). The interval 275 to 452 (RENGLDKTRL…PGGKPAYSFH (178 aa)) is SP domain. Lysine 281 is modified (N6-acetyllysine). The span at 290–305 (PISPASVASSSSTPSS) shows a compositional bias: low complexity. Serine 292 is modified (phosphoserine). A compositionally biased stretch (polar residues) spans 317–328 (TTPVSKSNTPTP). Threonine 318 bears the Phosphothreonine mark. Serine 321 and serine 323 each carry phosphoserine. 4 positions are modified to phosphothreonine: threonine 325, threonine 327, threonine 334, and threonine 340. Residue serine 419 is modified to Phosphoserine. WD repeat units lie at residues 485–523 (NHGEVVCAVTISNPTRHVYTGGKGCVKVWDISHPGNKSP), 531–570 (NRDNYIRSCRLLPDGRTLIVGGEASTLSIWDLAAPTPRIK), 575–614 (SSAPACYALAISPDSKVCFSCCSDGNIAVWDLHNQTLVRQ), 617–656 (GHTDGASCIDISNDGTKLWTGGLDNTVRSWDLREGRQLQQ), 658–697 (DFTSQIFSLGYCPTGEWLAVGMENSNVEVLHVTKPDKYQL), 699–738 (LHESCVLSLKFAHCGKWFVSTGKDNLLNAWRTPYGASIFQ), and 740–773 (KESSSVLSCDISVDDKYIVTGSGDKKATVYEVIY).

This sequence belongs to the WD repeat Groucho/TLE family. In terms of assembly, homooligomer and heterooligomer with other family members. Interacts with PAX5. Interacts with LEF1, TCF7, TCF7L1 and TCF7L2. Interacts with ZNF703; TLE4 may mediate ZNF703 transcriptional repression. Interacts with SIX3 and SIX6. Interacts with PAX2. Interacts with TLE1. In terms of processing, phosphorylated. PAX5 binding increases phosphorylation. Post-translationally, ubiquitinated by XIAP/BIRC4. As to expression, expressed in bone marrow-derived macrophages.

The protein resides in the nucleus. In terms of biological role, transcriptional corepressor that binds to a number of transcription factors. Inhibits the transcriptional activation mediated by PAX5, and by CTNNB1 and TCF family members in Wnt signaling. The effects of full-length TLE family members may be modulated by association with dominant-negative AES. Essential for the transcriptional repressor activity of SIX3 during retina and lens development and for SIX3 transcriptional auto-repression. Involved in transcriptional repression of GNRHR and enhances MSX1-mediated transcriptional repression of CGA/alpha-GSU. The polypeptide is Transducin-like enhancer protein 4 (Tle4) (Mus musculus (Mouse)).